A 396-amino-acid polypeptide reads, in one-letter code: Probable sugar efflux transporter (396 aa).

12 helical membrane passes run 15–35 (VVTL…PVGL), 50–70 (VGIM…PFML), 81–101 (LICL…AWNF), 103–123 (VLVI…SITA), 136–156 (AQAL…GLPI), 169–189 (TFFA…KLLP), 202–222 (LPLL…VVVV), 246–266 (FATV…LVFG), 275–295 (SLVS…LPAA), 301–321 (LAIL…GMQV), 333–353 (VAMA…ALVG), and 364–384 (AIGY…VLIF).

The protein belongs to the major facilitator superfamily. SotB (TC 2.A.1.2) family.

The protein localises to the cell inner membrane. Involved in the efflux of sugars. The physiological role may be the reduction of the intracellular concentration of toxic sugars or sugar metabolites. This Salmonella paratyphi A (strain ATCC 9150 / SARB42) protein is Probable sugar efflux transporter.